Here is a 508-residue protein sequence, read N- to C-terminus: Transcription termination factor MTERF4, chloroplastic (508 aa).

A chloroplast-targeting transit peptide spans 1–79 (MMKSLFLFSA…PSLLDMERGR (79 aa)). The segment covering 28-49 (RLTASASTSASSPPRAGCSRGP) has biased composition (low complexity). Disordered stretches follow at residues 28 to 69 (RLTA…LYAR) and 475 to 508 (FDTNTLSERVEDEVEDEDLDEDSDYDSTDDEFIE). Residues 484–508 (VEDEVEDEDLDEDSDYDSTDDEFIE) are compositionally biased toward acidic residues.

It belongs to the mTERF family.

The protein localises to the plastid. The protein resides in the chloroplast stroma. Its function is as follows. Transcription termination factor required for processing and steady-state levels of plastid transcripts. Required for splicing of the chloroplastic group II intron. Required for the accumulation of 16S and 23S ribosomes. The polypeptide is Transcription termination factor MTERF4, chloroplastic (Oryza sativa subsp. japonica (Rice)).